A 386-amino-acid chain; its full sequence is S-adenosylmethionine synthase (386 aa).

ATP is bound at residue His16. Asp18 is a binding site for Mg(2+). K(+) is bound at residue Glu44. Residues Glu57 and Gln100 each coordinate L-methionine. Residues 100–110 (QSRDITQGVDR) form a flexible loop region. Residues 165-167 (DAK), Asp240, 246-247 (RK), Ala263, and Lys267 each bind ATP. Asp240 lines the L-methionine pocket. Lys271 lines the L-methionine pocket.

Belongs to the AdoMet synthase family. In terms of assembly, homotetramer; dimer of dimers. Mg(2+) is required as a cofactor. K(+) serves as cofactor.

Its subcellular location is the cytoplasm. The catalysed reaction is L-methionine + ATP + H2O = S-adenosyl-L-methionine + phosphate + diphosphate. The protein operates within amino-acid biosynthesis; S-adenosyl-L-methionine biosynthesis; S-adenosyl-L-methionine from L-methionine: step 1/1. Catalyzes the formation of S-adenosylmethionine (AdoMet) from methionine and ATP. The overall synthetic reaction is composed of two sequential steps, AdoMet formation and the subsequent tripolyphosphate hydrolysis which occurs prior to release of AdoMet from the enzyme. In Francisella tularensis subsp. tularensis (strain WY96-3418), this protein is S-adenosylmethionine synthase.